We begin with the raw amino-acid sequence, 474 residues long: tRNA modification GTPase MnmE (474 aa).

R35, E92, and K135 together coordinate (6S)-5-formyl-5,6,7,8-tetrahydrofolate. Residues 231-396 (GLHVVLAGQP…LRAALLEIAG (166 aa)) enclose the TrmE-type G domain. A K(+)-binding site is contributed by N241. GTP contacts are provided by residues 241–246 (NVGKSS), 260–266 (TPIAGTT), 285–288 (DTAG), and 377–379 (SAR). S245 serves as a coordination point for Mg(2+). 3 residues coordinate K(+): T260, I262, and T265. T266 lines the Mg(2+) pocket. K474 is a (6S)-5-formyl-5,6,7,8-tetrahydrofolate binding site.

Belongs to the TRAFAC class TrmE-Era-EngA-EngB-Septin-like GTPase superfamily. TrmE GTPase family. In terms of assembly, homodimer. Heterotetramer of two MnmE and two MnmG subunits. K(+) is required as a cofactor.

Its subcellular location is the cytoplasm. Exhibits a very high intrinsic GTPase hydrolysis rate. Involved in the addition of a carboxymethylaminomethyl (cmnm) group at the wobble position (U34) of certain tRNAs, forming tRNA-cmnm(5)s(2)U34. This Ralstonia nicotianae (strain ATCC BAA-1114 / GMI1000) (Ralstonia solanacearum) protein is tRNA modification GTPase MnmE.